Here is a 604-residue protein sequence, read N- to C-terminus: Prostaglandin G/H synthase 2 (604 aa).

The N-terminal stretch at Met-1–Ala-17 is a signal peptide. One can recognise an EGF-like domain in the interval Ala-18–Ser-55. 4 disulfide bridges follow: Cys-21–Cys-32, Cys-22–Cys-145, Cys-26–Cys-42, and Cys-44–Cys-54. A glycan (N-linked (GlcNAc...) asparagine) is linked at Asn-53. Arg-106 contacts substrate. Residue Asn-130 is glycosylated (N-linked (GlcNAc...) asparagine). Catalysis depends on His-193, which acts as the Proton acceptor. Tyr-341 is a substrate binding site. Tyr-371 (for cyclooxygenase activity) is an active-site residue. His-374 serves as a coordination point for heme b. The N-linked (GlcNAc...) asparagine glycan is linked to Asn-396. Cys-526 carries the post-translational modification S-nitrosocysteine. Cys-555 and Cys-561 form a disulfide bridge. N-linked (GlcNAc...) asparagine glycosylation occurs at Asn-580.

It belongs to the prostaglandin G/H synthase family. In terms of assembly, homodimer. The cofactor is heme b. S-nitrosylation by NOS2 (iNOS) activates enzyme activity. S-nitrosylation may take place on different Cys residues in addition to Cys-526.

Its subcellular location is the microsome membrane. The protein localises to the endoplasmic reticulum membrane. It is found in the nucleus inner membrane. The protein resides in the nucleus outer membrane. It catalyses the reaction (5Z,8Z,11Z,14Z)-eicosatetraenoate + AH2 + 2 O2 = prostaglandin H2 + A + H2O. The catalysed reaction is (5Z,8Z,11Z,14Z)-eicosatetraenoate + 2 O2 = prostaglandin G2. The enzyme catalyses prostaglandin G2 + AH2 = prostaglandin H2 + A + H2O. It carries out the reaction (5Z,8Z,11Z,14Z,17Z)-eicosapentaenoate + 2 O2 = prostaglandin G3. It catalyses the reaction prostaglandin G3 + AH2 = prostaglandin H3 + A + H2O. The catalysed reaction is (8Z,11Z,14Z)-eicosatrienoate + 2 O2 = prostaglandin G1. The enzyme catalyses prostaglandin G1 + AH2 = prostaglandin H1 + A + H2O. It carries out the reaction 2-(5Z,8Z,11Z,14Z)-eicosatetraenoyl-sn-glycero-3-phosphoethanolamine + 2 O2 = 2-(prostaglandin G2)-sn-glycero-3-phosphoethanolamine. It catalyses the reaction 2-(prostaglandin G2)-sn-glycero-3-phosphoethanolamine + AH2 = 2-(prostaglandin H2)-sn-glycero-3-phosphoethanolamine + A + H2O. The catalysed reaction is 2-(5Z,8Z,11Z,14Z)-eicosatetraenoyl-sn-glycero-3-phosphocholine + 2 O2 = 2-(prostaglandin G2)-sn-glycero-3-phosphocholine. The enzyme catalyses 2-(prostaglandin G2)-sn-glycero-3-phosphocholine + AH2 = 2-(prostaglandin H2)-sn-glycero-3-phosphocholine + A + H2O. It carries out the reaction (15S)-hydroperoxy-(5Z,8Z,11Z,13E)-eicosatetraenoate + AH2 = (15S)-hydroxy-(5Z,8Z,11Z,13E)-eicosatetraenoate + A + H2O. It catalyses the reaction 2-(5Z,8Z,11Z,14Z)-eicosatetraenoyl-sn-glycero-3-phosphocholine + AH2 + O2 = 2-[(15S)-hydroxy-(5Z,8Z,11Z,13E)-eicosatetraenoyl]-sn-glycero-3-phosphocholine + A + H2O. The catalysed reaction is 2-(5Z,8Z,11Z,14Z)-eicosatetraenoyl-sn-glycero-3-phosphocholine + AH2 + O2 = 2-[(15R)-hydroxy-(5Z,8Z,11Z,13E)-eicosatetraenoyl]-sn-glycero-3-phosphocholine + A + H2O. The enzyme catalyses 2-(5Z,8Z,11Z,14Z)-eicosatetraenoyl-sn-glycero-3-phosphocholine + AH2 + O2 = 2-[(11R)-hydroxy-(5Z,8Z,12E,14Z)-eicosatetraenoyl]-sn-glycero-3-phosphocholine + A + H2O. It carries out the reaction (9Z,12Z)-octadecadienoate + AH2 + O2 = 9-hydroxy-(10E,12Z)-octadecadienoate + A + H2O. It catalyses the reaction (9Z,12Z)-octadecadienoate + AH2 + O2 = 13-hydroxy-(9Z,11E)-octadecadienoate + A + H2O. The catalysed reaction is (5Z,8Z,11Z,14Z)-eicosatetraenoate + AH2 + O2 = (15R)-hydroxy-(5Z,8Z,11Z,13E)-eicosatetraenoate + A + H2O. The enzyme catalyses (5Z,8Z,11Z,14Z)-eicosatetraenoate + AH2 + O2 = (11R)-hydroxy-(5Z,8Z,12E,14Z)-eicosatetraenoate + A + H2O. It carries out the reaction (5Z,8Z,11Z,14Z,17Z)-eicosapentaenoate + AH2 + O2 = (11R)-hydroxy-(5Z,8Z,12E,14Z,17Z)-eicosapentaenoate + A + H2O. It catalyses the reaction (5Z,8Z,11Z,14Z,17Z)-eicosapentaenoate + AH2 + O2 = (18S)-hydroxy-(5Z,8Z,11Z,14Z,16E)-eicosapentaenoate + A + H2O. The catalysed reaction is (5Z,8Z,11Z,14Z,17Z)-eicosapentaenoate + AH2 + O2 = (18R)-hydroxy-(5Z,8Z,11Z,14Z,16E)-eicosapentaenoate + A + H2O. The enzyme catalyses (5Z,8Z,11Z,14Z,17Z)-eicosapentaenoate + AH2 + O2 = (15R)-hydroxy-(5Z,8Z,11Z,13E,17Z)-eicosapentaenoate + A + H2O. It carries out the reaction (5Z,8Z,11Z,14Z,17Z)-eicosapentaenoate + AH2 + O2 = (15S)-hydroxy-(5Z,8Z,11Z,13E,17Z)-eicosapentaenoate + A + H2O. It catalyses the reaction (7Z,10Z,13Z,16Z,19Z)-docosapentaenoate + AH2 + O2 = 13R-hydroxy-(7Z,10Z,14E,16Z,19Z)-docosapentaenoate + A + H2O. The catalysed reaction is (4Z,7Z,10Z,13Z,16Z,19Z)-docosahexaenoate + AH2 + O2 = 13-hydroxy-(4Z,7Z,10Z,14E,16Z,19Z)-docosahexaenoate + A + H2O. The enzyme catalyses (5S)-hydroxy-(6E,8Z,11Z,14Z)-eicosatetraenoate + AH2 + O2 = (5S,15R)-dihydroxy-(6E,8Z,11Z,13E)-eicosatetraenoate + A + H2O. It carries out the reaction (4Z,7Z,10Z,13Z,16Z,19Z)-docosahexaenoate + AH2 + O2 = 17R-hydroxy-(4Z,7Z,10Z,13Z,15E,19Z)-docosahexaenoate + A + H2O. It catalyses the reaction (5S)-hydroxy-(6E,8Z,11Z,14Z)-eicosatetraenoate + AH2 + O2 = (5S,15S)-dihydroxy-(6E,8Z,11Z,13E)-eicosatetraenoate + A + H2O. The catalysed reaction is (5S)-hydroxy-(6E,8Z,11Z,14Z)-eicosatetraenoate + AH2 + O2 = (5S,11R)-dihydroxy-(6E,8Z,12E,14Z)-eicosatetraenoate + A + H2O. The enzyme catalyses 2-(5Z,8Z,11Z,14Z-eicosatetraenoyl)-glycerol + 2 O2 = 2-glyceryl-prostaglandin G2. It carries out the reaction 2-glyceryl-prostaglandin G2 + AH2 = 2-glyceryl-prostaglandin H2 + A + H2O. It catalyses the reaction (5Z,8Z,11Z,14Z)-eicosatetraenoate + O2 = (15R)-hydroperoxy-(5Z,8Z,11Z,13E)-eicosatetraenoate. The catalysed reaction is (5Z,8Z,11Z,14Z)-eicosatetraenoate + O2 = 11R-hydroperoxy-(5Z,8Z,12E,14Z)-eicosatetraenoate. The enzyme catalyses (9Z,12Z)-octadecadienoate + AH2 + O2 = (9R)-hydroxy-(10E,12Z)-octadecadienoate + A + H2O. It carries out the reaction (9Z,12Z)-octadecadienoate + AH2 + O2 = (9S)-hydroxy-(10E,12Z)-octadecadienoate + A + H2O. It catalyses the reaction (9Z,12Z)-octadecadienoate + AH2 + O2 = (13S)-hydroxy-(9Z,11E)-octadecadienoate + A + H2O. The catalysed reaction is (9Z,12Z)-octadecadienoate + AH2 + O2 = (13R)-hydroxy-(9Z,11E)-octadecadienoate + A + H2O. It participates in lipid metabolism; prostaglandin biosynthesis. Dual cyclooxygenase and peroxidase in the biosynthesis pathway of prostanoids, a class of C20 oxylipins mainly derived from arachidonate ((5Z,8Z,11Z,14Z)-eicosatetraenoate, AA, C20:4(n-6)), with a particular role in the inflammatory response. The cyclooxygenase activity oxygenates AA to the hydroperoxy endoperoxide prostaglandin G2 (PGG2), and the peroxidase activity reduces PGG2 to the hydroxy endoperoxide prostaglandin H2 (PGH2), the precursor of all 2-series prostaglandins and thromboxanes. This complex transformation is initiated by abstraction of hydrogen at carbon 13 (with S-stereochemistry), followed by insertion of molecular O2 to form the endoperoxide bridge between carbon 9 and 11 that defines prostaglandins. The insertion of a second molecule of O2 (bis-oxygenase activity) yields a hydroperoxy group in PGG2 that is then reduced to PGH2 by two electrons. Similarly catalyzes successive cyclooxygenation and peroxidation of dihomo-gamma-linoleate (DGLA, C20:3(n-6)) and eicosapentaenoate (EPA, C20:5(n-3)) to corresponding PGH1 and PGH3, the precursors of 1- and 3-series prostaglandins. In an alternative pathway of prostanoid biosynthesis, converts 2-arachidonoyl lysophopholipids to prostanoid lysophopholipids, which are then hydrolyzed by intracellular phospholipases to release free prostanoids. Metabolizes 2-arachidonoyl glycerol yielding the glyceryl ester of PGH2, a process that can contribute to pain response. Generates lipid mediators from n-3 and n-6 polyunsaturated fatty acids (PUFAs) via a lipoxygenase-type mechanism. Oxygenates PUFAs to hydroperoxy compounds and then reduces them to corresponding alcohols. Plays a role in the generation of resolution phase interaction products (resolvins) during both sterile and infectious inflammation. Metabolizes docosahexaenoate (DHA, C22:6(n-3)) to 17R-HDHA, a precursor of the D-series resolvins (RvDs). As a component of the biosynthetic pathway of E-series resolvins (RvEs), converts eicosapentaenoate (EPA, C20:5(n-3)) primarily to 18S-HEPE that is further metabolized by ALOX5 and LTA4H to generate 18S-RvE1 and 18S-RvE2. In vascular endothelial cells, converts docosapentaenoate (DPA, C22:5(n-3)) to 13R-HDPA, a precursor for 13-series resolvins (RvTs) shown to activate macrophage phagocytosis during bacterial infection. In activated leukocytes, contributes to oxygenation of hydroxyeicosatetraenoates (HETE) to diHETES (5,15-diHETE and 5,11-diHETE). Can also use linoleate (LA, (9Z,12Z)-octadecadienoate, C18:2(n-6)) as substrate and produce hydroxyoctadecadienoates (HODEs) in a regio- and stereospecific manner, being (9R)-HODE ((9R)-hydroxy-(10E,12Z)-octadecadienoate) and (13S)-HODE ((13S)-hydroxy-(9Z,11E)-octadecadienoate) its major products. During neuroinflammation, plays a role in neuronal secretion of specialized preresolving mediators (SPMs) 15R-lipoxin A4 that regulates phagocytic microglia. The protein is Prostaglandin G/H synthase 2 (PTGS2) of Equus caballus (Horse).